A 303-amino-acid chain; its full sequence is UDP-3-O-acyl-N-acetylglucosamine deacetylase (303 aa).

Zn(2+)-binding residues include His-78, His-237, and Asp-241. The Proton donor role is filled by His-264.

It belongs to the LpxC family. Requires Zn(2+) as cofactor.

The catalysed reaction is a UDP-3-O-[(3R)-3-hydroxyacyl]-N-acetyl-alpha-D-glucosamine + H2O = a UDP-3-O-[(3R)-3-hydroxyacyl]-alpha-D-glucosamine + acetate. The protein operates within glycolipid biosynthesis; lipid IV(A) biosynthesis; lipid IV(A) from (3R)-3-hydroxytetradecanoyl-[acyl-carrier-protein] and UDP-N-acetyl-alpha-D-glucosamine: step 2/6. Its function is as follows. Catalyzes the hydrolysis of UDP-3-O-myristoyl-N-acetylglucosamine to form UDP-3-O-myristoylglucosamine and acetate, the committed step in lipid A biosynthesis. The sequence is that of UDP-3-O-acyl-N-acetylglucosamine deacetylase from Pseudomonas fluorescens (strain SBW25).